The primary structure comprises 520 residues: Sodium-dependent dicarboxylate transporter SdcS (520 aa).

The next 14 membrane-spanning stretches (helical) occupy residues 30–50, 55–75, 77–97, 104–124, 160–180, 207–227, 242–262, 298–318, 323–343, 362–382, 399–419, 428–448, 452–472, and 491–511; these read AGQL…LLFF, LPWK…WWIT, AIPI…GHIL, SEYG…AIAM, SMFV…LAII, IGYA…PLII, FAKW…ITWL, KVVQ…EFLL, VTSS…LFII, ELPW…KGIS, GVSP…LTEV, MILP…LLLM, AMAA…AIIF, and LISA…VLGI.

Belongs to the SLC13A/DASS transporter (TC 2.A.47) family. NADC subfamily.

Its subcellular location is the cell membrane. Its function is as follows. Mediates the transport of the dicarboxylates fumarate, malate, and succinate across the cytoplasmic membrane via a Na(+)-electrochemical gradient. The protein is Sodium-dependent dicarboxylate transporter SdcS (sdcS) of Staphylococcus aureus (strain NCTC 8325 / PS 47).